Consider the following 451-residue polypeptide: MLCKTGGCVEGRAAEDQSTRKVHWGQEGSGQSPEARPRALDMISRLEPSRGPSHAHWWHIISPQLAVMLEETGYPVEKQLEILTFLYHWVIPYLAPVAAGNAASSCNWKSLLPSAIVPLEYSWKWDSSGKAREPEIRLTIEVFGELSGTQFDPLNQAPAMELLYRLSSILPGVNQILASHFRCKFFDHDNVKYMEEPRLDTLPRSTMLTYMTPRKLGQQGFAPLSEYVSAIQALGQASGRTLDTLTNFLSTSPEGVHLHPFGLAFDNVEPSSSRLKLYFFSNRTSYNSMREVLTLGGRIYSESYDMEEKLRTIYSLAQLLMGCPENNAEDADIPLLPITHSQHTAAERATLLSGFQYYFDVAPGADLPSVKFYIPVRKEHANDRAVGSALTGWFREQGRGKFCDNYMRMLERLAGGLELGECRGLHSFISCMIGGDGEIEVTSYLLPGSEA.

The segment at 14–37 (AEDQSTRKVHWGQEGSGQSPEARP) is disordered. Glu120 contributes to the L-tryptophan binding site. Residues Arg137, Arg274, Lys276, Tyr278, and Tyr373 each coordinate substrate.

Belongs to the tryptophan dimethylallyltransferase family.

It catalyses the reaction quinolinone B + dimethylallyl diphosphate = peniprequinolone + diphosphate. It functions in the pathway secondary metabolite biosynthesis. It participates in alkaloid biosynthesis. Its pathway is mycotoxin biosynthesis. In terms of biological role, prenyltransferase; part of the gene cluster that mediates the biosynthesis of the aspoquinolone mycotoxins. Within the pathway, the prenyltransferase asqH1 catalyzes the canonical Friedel-Crafts alkylation of quinolinone B with dimethylallyl cation to yield dimethylallyl quinolone. The first step of the pathway is catalyzed by the nonribosomal peptide synthetase asqK that condenses anthranilic acid and O-methyl-L-tyrosine to produce 4'-methoxycyclopeptin. 4'-methoxycyclopeptin is then converted to 4'-methoxydehydrocyclopeptin by the ketoglutarate-dependent dioxygenase asqJ. AsqJ also converts its first product 4'-methoxydehydrocyclopeptin to 4'-methoxycyclopenin. The following conversion of 4'-methoxycyclopenin into 4'-methoxyviridicatin is catalyzed by the cyclopenase asqI. 4'-methoxyviridicatin is the precursor of quinolone natural products, and is further converted to quinolinone B. The prenyltransferase asqH1 then catalyzes the canonical Friedel-Crafts alkylation of quinolinone B with dimethylallyl cation to yield dimethylallyl quinolone, which is subjected to FAD-dependent dehydrogenation by the FAD-linked oxidoreductase asqF to yield conjugated aryl diene. The delta(3') double bond then serves as the site of the second alkylation with DMAPP catalyzed by the prenyltransferase asqH2 to yield a carbenium ion intermediate, which can be attacked by H(2)O to yield a styrenyl quinolone containing a C3'-hydroxyprenyl chain. The FAD-dependent monooxygenase asqG performs epoxidation of the terminal C7'-C8' olefin. Finally, after dehydratation of the epoxide at C3 by asqC, the quinolone epoxide rearrangement protein asqO catalyzes an enzymatic 3-exo-tet cyclization to yield the cyclopropyl-THF ring system in aspoquinolone. This chain is Prenyltransferase asqH1, found in Emericella nidulans (strain FGSC A4 / ATCC 38163 / CBS 112.46 / NRRL 194 / M139) (Aspergillus nidulans).